Here is a 62-residue protein sequence, read N- to C-terminus: Photosystem II reaction center protein Z (62 aa).

Transmembrane regions (helical) follow at residues 8-28 (ALLL…VLYA) and 41-61 (LVGG…NYFV).

Belongs to the PsbZ family. In terms of assembly, PSII is composed of 1 copy each of membrane proteins PsbA, PsbB, PsbC, PsbD, PsbE, PsbF, PsbH, PsbI, PsbJ, PsbK, PsbL, PsbM, PsbT, PsbX, PsbY, PsbZ, Psb30/Ycf12, peripheral proteins PsbO, CyanoQ (PsbQ), PsbU, PsbV and a large number of cofactors. It forms dimeric complexes.

The protein resides in the cellular thylakoid membrane. Functionally, may control the interaction of photosystem II (PSII) cores with the light-harvesting antenna, regulates electron flow through the 2 photosystem reaction centers. PSII is a light-driven water plastoquinone oxidoreductase, using light energy to abstract electrons from H(2)O, generating a proton gradient subsequently used for ATP formation. The protein is Photosystem II reaction center protein Z of Synechococcus elongatus (strain ATCC 33912 / PCC 7942 / FACHB-805) (Anacystis nidulans R2).